The primary structure comprises 612 residues: uncharacterized protein (612 aa).

It is found in the plastid. The protein resides in the chloroplast. This is an uncharacterized protein from Pyropia yezoensis (Susabi-nori).